The primary structure comprises 230 residues: DNA ADP-ribosyl transferase (230 aa).

Residues 26–230 (WIVWHFTHAD…KYVIKPGMYY (205 aa)) enclose the DarT domain. NAD(+) contacts are provided by residues 30–32 (HFT), Gly39, Leu47, and Arg67. Arg67 functions as the Proton acceptor in the catalytic mechanism. Glu183 is a catalytic residue.

It belongs to the DarT ADP-ribosyltransferase family. Interacts with cognate antitoxin DarG (via C-terminus); this heterodimeric complex neutralizes the toxic effect of DarT by preventing ssDNA binding to DarT and consequently inactivating the toxin by direct protein-protein interactions.

It catalyses the reaction a thymidine in DNA + NAD(+) = an N-(ADP-alpha-D-ribosyl)-thymidine in DNA + nicotinamide + H(+). In terms of biological role, toxic component of the hybrid type II/IV toxin-antitoxin (TA) system DarTG, which plays a crucial role in controlling bacterial growth and bacteriophage infection. ADP-ribosylates ssDNA, preferentially in the motif TTTW. In case of phage infection, DarT toxin ADP-ribosylates DNA, which inhibits both viral DNA and RNA synthesis and leads to abortive infection. Its toxic effect is neutralized by cognate antitoxin DarG. The sequence is that of DNA ADP-ribosyl transferase from Mycobacterium bovis (strain BCG / Pasteur 1173P2).